Here is a 298-residue protein sequence, read N- to C-terminus: UDP-3-O-acyl-N-acetylglucosamine deacetylase (298 aa).

Zn(2+) is bound by residues His80, His239, and Asp243. His266 functions as the Proton donor in the catalytic mechanism.

Belongs to the LpxC family. Zn(2+) is required as a cofactor.

It carries out the reaction a UDP-3-O-[(3R)-3-hydroxyacyl]-N-acetyl-alpha-D-glucosamine + H2O = a UDP-3-O-[(3R)-3-hydroxyacyl]-alpha-D-glucosamine + acetate. The protein operates within glycolipid biosynthesis; lipid IV(A) biosynthesis; lipid IV(A) from (3R)-3-hydroxytetradecanoyl-[acyl-carrier-protein] and UDP-N-acetyl-alpha-D-glucosamine: step 2/6. In terms of biological role, catalyzes the hydrolysis of UDP-3-O-myristoyl-N-acetylglucosamine to form UDP-3-O-myristoylglucosamine and acetate, the committed step in lipid A biosynthesis. The chain is UDP-3-O-acyl-N-acetylglucosamine deacetylase from Blochmanniella floridana.